We begin with the raw amino-acid sequence, 379 residues long: Flap endonuclease 1 (379 aa).

The N-domain stretch occupies residues 1–105 (MGIKGLTKLL…QELAKRYSKR (105 aa)). Aspartate 34 is a Mg(2+) binding site. Residue arginine 71 participates in DNA binding. The Mg(2+) site is built by aspartate 87, glutamate 159, glutamate 161, aspartate 180, and aspartate 182. Positions 123–254 (AIEKLSKRTV…QTALKLIRQH (132 aa)) are I-domain. Position 159 (glutamate 159) interacts with DNA. Glycine 232 and aspartate 234 together coordinate DNA. Aspartate 234 lines the Mg(2+) pocket. Positions 331–379 (AKNKSSQGRLESFFKPTATTSAPLKRKETSDKTSKAAANKKTKAGGKKK) are disordered. Residues 336–344 (SQGRLESFF) are interaction with PCNA. A compositionally biased stretch (basic and acidic residues) spans 355 to 364 (KRKETSDKTS). Over residues 368–379 (ANKKTKAGGKKK) the composition is skewed to basic residues.

It belongs to the XPG/RAD2 endonuclease family. FEN1 subfamily. Interacts with PCNA. Three molecules of FEN1 bind to one PCNA trimer with each molecule binding to one PCNA monomer. PCNA stimulates the nuclease activity without altering cleavage specificity. Mg(2+) serves as cofactor. Post-translationally, phosphorylated. Phosphorylation upon DNA damage induces relocalization to the nuclear plasma.

The protein localises to the nucleus. The protein resides in the nucleolus. It is found in the nucleoplasm. It localises to the mitochondrion. In terms of biological role, structure-specific nuclease with 5'-flap endonuclease and 5'-3' exonuclease activities involved in DNA replication and repair. During DNA replication, cleaves the 5'-overhanging flap structure that is generated by displacement synthesis when DNA polymerase encounters the 5'-end of a downstream Okazaki fragment. It enters the flap from the 5'-end and then tracks to cleave the flap base, leaving a nick for ligation. Also involved in the long patch base excision repair (LP-BER) pathway, by cleaving within the apurinic/apyrimidinic (AP) site-terminated flap. Acts as a genome stabilization factor that prevents flaps from equilibrating into structures that lead to duplications and deletions. Also possesses 5'-3' exonuclease activity on nicked or gapped double-stranded DNA, and exhibits RNase H activity. Also involved in replication and repair of rDNA and in repairing mitochondrial DNA. The chain is Flap endonuclease 1 from Zea mays (Maize).